The chain runs to 435 residues: GTPase Obg (435 aa).

An Obg domain is found at 1 to 158 (MFLDTAKVSV…RQLELELKIL (158 aa)). Residues 159-336 (ADVGLVGFPS…LLEATAELLA (178 aa)) enclose the OBG-type G domain. GTP is bound by residues 165–172 (GFPSVGKS), 190–194 (FTTIV), 212–215 (DLPG), 282–285 (NKMD), and 317–319 (SSL). Mg(2+) contacts are provided by Ser172 and Thr192. The OCT domain occupies 357-435 (GFAAEEKAFE…IGKFEFEFVD (79 aa)).

This sequence belongs to the TRAFAC class OBG-HflX-like GTPase superfamily. OBG GTPase family. In terms of assembly, monomer. Mg(2+) is required as a cofactor.

The protein resides in the cytoplasm. Its function is as follows. An essential GTPase which binds GTP, GDP and possibly (p)ppGpp with moderate affinity, with high nucleotide exchange rates and a fairly low GTP hydrolysis rate. Plays a role in control of the cell cycle, stress response, ribosome biogenesis and in those bacteria that undergo differentiation, in morphogenesis control. The protein is GTPase Obg of Streptococcus equi subsp. zooepidemicus (strain MGCS10565).